The following is a 611-amino-acid chain: Adenosylhomocysteinase 3 (611 aa).

Composition is skewed to low complexity over residues 1–14, 40–57, and 68–78; these read MSVQVVSAAAAAKV, AMAPPAGGGDPEAPAPAA, and GPAAALSPAAG. The interval 1–184 is disordered; the sequence is MSVQVVSAAA…KQQKNSKGNS (184 aa). Ser2 bears the N-acetylserine mark. An LISN domain, inhibits interaction with ITPR1 region spans residues 2–109; that stretch reads SVQVVSAAAA…DGGEALVSPD (108 aa). Ser107 bears the Phosphoserine mark. Residues 135-144 show a composition bias toward basic residues; the sequence is RPTKIGRRSL. A compositionally biased stretch (low complexity) spans 145 to 164; sequence SRSISQSSTDSYSSAASYTD. Phosphoserine occurs at positions 149, 152, 155, and 158. Positions 236, 310, and 335 each coordinate substrate. An NAD(+)-binding site is contributed by 336–338; that stretch reads SVT. 2 residues coordinate substrate: Lys365 and Asp369. NAD(+)-binding positions include Asn370, 401-406, Glu422, Asn457, 478-479, and Asn525; these read GEVGKG and MG.

This sequence belongs to the adenosylhomocysteinase family. In terms of assembly, homotetramer. Forms heteromultimers with AHCYL1 (via the C-terminal region). Interacts with ITPR1; with lower affinity than AHCYL1 and maybe via ITPR1. Interacts with SLC4A4. Interacts with ZCCHC4. NAD(+) is required as a cofactor. In terms of processing, phosphorylated during neuronal differentiation at the LISN domain. In terms of tissue distribution, expressed in parotid and acinar cells (at protein level).

The protein localises to the cytoplasm. Its subcellular location is the microsome. The catalysed reaction is S-adenosyl-L-homocysteine + H2O = L-homocysteine + adenosine. It functions in the pathway amino-acid biosynthesis; L-homocysteine biosynthesis; L-homocysteine from S-adenosyl-L-homocysteine: step 1/1. Functionally, may regulate the electrogenic sodium/bicarbonate cotransporter SLC4A4 activity and Mg(2+)-sensitivity. On the contrary of its homolog AHCYL1, does not regulate ITPR1 sensitivity to inositol 1,4,5-trisphosphate. The chain is Adenosylhomocysteinase 3 from Bos taurus (Bovine).